The primary structure comprises 249 residues: Methionine aminopeptidase 2 (249 aa).

His-76 is a substrate binding site. The a divalent metal cation site is built by Asp-94, Asp-105, and His-168. His-175 provides a ligand contact to substrate. Positions 202 and 233 each coordinate a divalent metal cation.

As to quaternary structure, monomer. Co(2+) serves as cofactor. It depends on Zn(2+) as a cofactor. The cofactor is Mn(2+). Fe(2+) is required as a cofactor.

It localises to the cytoplasm. It catalyses the reaction Release of N-terminal amino acids, preferentially methionine, from peptides and arylamides.. Its function is as follows. Removes the N-terminal methionine from nascent proteins. The N-terminal methionine is often cleaved when the second residue in the primary sequence is small and uncharged (Met-Ala-, Cys, Gly, Pro, Ser, Thr, or Val). Requires deformylation of the N(alpha)-formylated initiator methionine before it can be hydrolyzed. The protein is Methionine aminopeptidase 2 of Bacillus subtilis (strain 168).